The following is a 170-amino-acid chain: Ubiquitin-conjugating enzyme E2 J2-like (170 aa).

The region spanning 15-165 is the UBC core domain; sequence DCITRLKREF…NKTFCELFPY (151 aa). Cys-97 acts as the Glycyl thioester intermediate in catalysis.

It belongs to the ubiquitin-conjugating enzyme family.

It catalyses the reaction S-ubiquitinyl-[E1 ubiquitin-activating enzyme]-L-cysteine + [E2 ubiquitin-conjugating enzyme]-L-cysteine = [E1 ubiquitin-activating enzyme]-L-cysteine + S-ubiquitinyl-[E2 ubiquitin-conjugating enzyme]-L-cysteine.. It participates in protein modification; protein ubiquitination. Catalyzes the covalent attachment of ubiquitin to other proteins. The polypeptide is Ubiquitin-conjugating enzyme E2 J2-like (Dictyostelium discoideum (Social amoeba)).